Here is a 74-residue protein sequence, read N- to C-terminus: MDDIDYIDDINEDSINHMLSTLANVRDPEFSATISLMQEVLKIINSRIIEIDKKYKKNNRNINSMNNASSRVSY.

The protein belongs to the chordopoxvirinae A30 family. Interacts with protein G7; the interaction stabilizes both proteins. Post-translationally, phosphorylated by viral F10 kinase.

Its function is as follows. Required for the association between the dense viroplasm and the viral membranes to form the mature virion (MV). The protein is Protein A30 homolog of Fowlpox virus (strain NVSL) (FPV).